A 193-amino-acid polypeptide reads, in one-letter code: ATP-dependent Clp protease proteolytic subunit (193 aa).

The active-site Nucleophile is Ser-98. His-123 is an active-site residue.

Belongs to the peptidase S14 family. Fourteen ClpP subunits assemble into 2 heptameric rings which stack back to back to give a disk-like structure with a central cavity, resembling the structure of eukaryotic proteasomes.

It is found in the cytoplasm. The enzyme catalyses Hydrolysis of proteins to small peptides in the presence of ATP and magnesium. alpha-casein is the usual test substrate. In the absence of ATP, only oligopeptides shorter than five residues are hydrolyzed (such as succinyl-Leu-Tyr-|-NHMec, and Leu-Tyr-Leu-|-Tyr-Trp, in which cleavage of the -Tyr-|-Leu- and -Tyr-|-Trp bonds also occurs).. In terms of biological role, cleaves peptides in various proteins in a process that requires ATP hydrolysis. Has a chymotrypsin-like activity. Plays a major role in the degradation of misfolded proteins. The polypeptide is ATP-dependent Clp protease proteolytic subunit (Pasteurella multocida (strain Pm70)).